The sequence spans 336 residues: 4-hydroxy-3-methylbut-2-enyl diphosphate reductase (336 aa).

C32 contributes to the [4Fe-4S] cluster binding site. The (2E)-4-hydroxy-3-methylbut-2-enyl diphosphate site is built by H61 and H94. Residues H61 and H94 each coordinate dimethylallyl diphosphate. Isopentenyl diphosphate-binding residues include H61 and H94. [4Fe-4S] cluster is bound at residue C116. Residue H148 coordinates (2E)-4-hydroxy-3-methylbut-2-enyl diphosphate. Residue H148 coordinates dimethylallyl diphosphate. An isopentenyl diphosphate-binding site is contributed by H148. E150 serves as the catalytic Proton donor. T189 serves as a coordination point for (2E)-4-hydroxy-3-methylbut-2-enyl diphosphate. A [4Fe-4S] cluster-binding site is contributed by C219. (2E)-4-hydroxy-3-methylbut-2-enyl diphosphate contacts are provided by S247, S248, N249, and S292. S247, S248, N249, and S292 together coordinate dimethylallyl diphosphate. S247, S248, N249, and S292 together coordinate isopentenyl diphosphate.

It belongs to the IspH family. It depends on [4Fe-4S] cluster as a cofactor.

It catalyses the reaction isopentenyl diphosphate + 2 oxidized [2Fe-2S]-[ferredoxin] + H2O = (2E)-4-hydroxy-3-methylbut-2-enyl diphosphate + 2 reduced [2Fe-2S]-[ferredoxin] + 2 H(+). The catalysed reaction is dimethylallyl diphosphate + 2 oxidized [2Fe-2S]-[ferredoxin] + H2O = (2E)-4-hydroxy-3-methylbut-2-enyl diphosphate + 2 reduced [2Fe-2S]-[ferredoxin] + 2 H(+). The protein operates within isoprenoid biosynthesis; dimethylallyl diphosphate biosynthesis; dimethylallyl diphosphate from (2E)-4-hydroxy-3-methylbutenyl diphosphate: step 1/1. It functions in the pathway isoprenoid biosynthesis; isopentenyl diphosphate biosynthesis via DXP pathway; isopentenyl diphosphate from 1-deoxy-D-xylulose 5-phosphate: step 6/6. Its function is as follows. Catalyzes the conversion of 1-hydroxy-2-methyl-2-(E)-butenyl 4-diphosphate (HMBPP) into a mixture of isopentenyl diphosphate (IPP) and dimethylallyl diphosphate (DMAPP). Acts in the terminal step of the DOXP/MEP pathway for isoprenoid precursor biosynthesis. This chain is 4-hydroxy-3-methylbut-2-enyl diphosphate reductase, found in Gluconobacter oxydans (strain 621H) (Gluconobacter suboxydans).